A 275-amino-acid chain; its full sequence is 2,3,4,5-tetrahydropyridine-2,6-dicarboxylate N-succinyltransferase (275 aa).

Residues Arg104 and Asp141 each contribute to the substrate site.

Belongs to the transferase hexapeptide repeat family. Homotrimer.

The protein localises to the cytoplasm. The enzyme catalyses (S)-2,3,4,5-tetrahydrodipicolinate + succinyl-CoA + H2O = (S)-2-succinylamino-6-oxoheptanedioate + CoA. Its pathway is amino-acid biosynthesis; L-lysine biosynthesis via DAP pathway; LL-2,6-diaminopimelate from (S)-tetrahydrodipicolinate (succinylase route): step 1/3. This chain is 2,3,4,5-tetrahydropyridine-2,6-dicarboxylate N-succinyltransferase, found in Haemophilus influenzae (strain 86-028NP).